A 233-amino-acid chain; its full sequence is MRAICVLSGGLDSAVTSLAAKFENYDITTVTFNYGQMALNQEIKSAKKISEILNADHHVIDINFVKEFSKSGLNTGEIPEPEKEDLDDFEKSEKTMKAVWVPARNMIMFSIASGFAEGIGAEKIFSGLNKEEGVTFPDNTPEFIERFNKSLEYGTLNKVKMVAPLYELNKPEIAKLGKELEVKLDLEVLKYSYSCYRDNGEDYLHCGTCESCMRRKRAFKEAGIVDPTKYLVE.

7 to 17 serves as a coordination point for ATP; sequence LSGGLDSAVTS. Zn(2+) is bound by residues Cys-195, Cys-206, Cys-209, and Cys-212.

The protein belongs to the QueC family. It depends on Zn(2+) as a cofactor.

It carries out the reaction 7-carboxy-7-deazaguanine + NH4(+) + ATP = 7-cyano-7-deazaguanine + ADP + phosphate + H2O + H(+). It functions in the pathway purine metabolism; 7-cyano-7-deazaguanine biosynthesis. Catalyzes the ATP-dependent conversion of 7-carboxy-7-deazaguanine (CDG) to 7-cyano-7-deazaguanine (preQ(0)). This is 7-cyano-7-deazaguanine synthase from Methanococcus maripaludis (strain C7 / ATCC BAA-1331).